Reading from the N-terminus, the 185-residue chain is Ribosome-recycling factor (185 aa).

This sequence belongs to the RRF family.

It is found in the cytoplasm. Functionally, responsible for the release of ribosomes from messenger RNA at the termination of protein biosynthesis. May increase the efficiency of translation by recycling ribosomes from one round of translation to another. The protein is Ribosome-recycling factor of Salmonella paratyphi A (strain ATCC 9150 / SARB42).